A 190-amino-acid chain; its full sequence is Potassium-transporting ATPase KdpC subunit (190 aa).

The chain crosses the membrane as a helical span at residues 9-29 (VMFILFTIICGGIYPSVVTGI).

The protein belongs to the KdpC family. The system is composed of three essential subunits: KdpA, KdpB and KdpC.

The protein localises to the cell inner membrane. Functionally, part of the high-affinity ATP-driven potassium transport (or Kdp) system, which catalyzes the hydrolysis of ATP coupled with the electrogenic transport of potassium into the cytoplasm. This subunit acts as a catalytic chaperone that increases the ATP-binding affinity of the ATP-hydrolyzing subunit KdpB by the formation of a transient KdpB/KdpC/ATP ternary complex. This is Potassium-transporting ATPase KdpC subunit from Citrifermentans bemidjiense (strain ATCC BAA-1014 / DSM 16622 / JCM 12645 / Bem) (Geobacter bemidjiensis).